A 492-amino-acid polypeptide reads, in one-letter code: Probable malate:quinone oxidoreductase (492 aa).

Belongs to the MQO family. The cofactor is FAD.

It catalyses the reaction (S)-malate + a quinone = a quinol + oxaloacetate. Its pathway is carbohydrate metabolism; tricarboxylic acid cycle; oxaloacetate from (S)-malate (quinone route): step 1/1. This chain is Probable malate:quinone oxidoreductase, found in Methylobacillus flagellatus (strain ATCC 51484 / DSM 6875 / VKM B-1610 / KT).